Here is a 172-residue protein sequence, read N- to C-terminus: Large ribosomal subunit protein uL10 (172 aa).

Belongs to the universal ribosomal protein uL10 family. As to quaternary structure, part of the ribosomal stalk of the 50S ribosomal subunit. The N-terminus interacts with L11 and the large rRNA to form the base of the stalk. The C-terminus forms an elongated spine to which L12 dimers bind in a sequential fashion forming a multimeric L10(L12)X complex.

In terms of biological role, forms part of the ribosomal stalk, playing a central role in the interaction of the ribosome with GTP-bound translation factors. The sequence is that of Large ribosomal subunit protein uL10 from Ruegeria pomeroyi (strain ATCC 700808 / DSM 15171 / DSS-3) (Silicibacter pomeroyi).